Here is a 162-residue protein sequence, read N- to C-terminus: MALVAGIGQLDAVVQGGHSATPRPATGPAGPAAHSGRHQYDPDAWWARATGDSREAGGLGRTLAAASVAGQQQRHGALLESAVTVVRPALLWNDTRRPGAAADLIQELGGADKWAEAVGIVPVASLTLTNSGWLARHEPANAAKVAAICLPHDWLTWKLSGS.

Residues 16 to 39 form a disordered region; that stretch reads GGHSATPRPATGPAGPAAHSGRHQ. A compositionally biased stretch (low complexity) spans 20-33; sequence ATPRPATGPAGPAA.

This sequence belongs to the FGGY kinase family.

It carries out the reaction D-xylulose + ATP = D-xylulose 5-phosphate + ADP + H(+). Functionally, catalyzes the phosphorylation of D-xylulose to D-xylulose 5-phosphate. This chain is Xylulose kinase, found in Actinoplanes sp. (strain ATCC 31351 / 3876) (Ampullariella sp.).